The chain runs to 202 residues: Dephospho-CoA kinase (202 aa).

The 200-residue stretch at I3 to C202 folds into the DPCK domain. Residue G11 to L16 coordinates ATP.

Belongs to the CoaE family.

The protein localises to the cytoplasm. The enzyme catalyses 3'-dephospho-CoA + ATP = ADP + CoA + H(+). It participates in cofactor biosynthesis; coenzyme A biosynthesis; CoA from (R)-pantothenate: step 5/5. Functionally, catalyzes the phosphorylation of the 3'-hydroxyl group of dephosphocoenzyme A to form coenzyme A. The chain is Dephospho-CoA kinase from Ehrlichia chaffeensis (strain ATCC CRL-10679 / Arkansas).